A 661-amino-acid polypeptide reads, in one-letter code: Probable potassium transport system protein Kup 1 (661 aa).

A compositionally biased stretch (gly residues) spans 1–11 (MKGLFPAGGGN). The disordered stretch occupies residues 1–38 (MKGLFPAGGGNPPSSYLSRFLPHRKERSPENVTSGRNG). 12 helical membrane passes run 48 to 68 (LALG…LYTI), 85 to 105 (IMGV…IKYI), 139 to 159 (AVVV…GFIT), 177 to 197 (AAKN…FLVQ), 207 to 227 (IFGP…LLCI), 251 to 271 (VHGL…EALY), 286 to 306 (WFAM…AALL), 324 to 344 (LLLP…QAMI), 384 to 404 (LMMV…GLAG), 405 to 425 (AYGV…FFVA), 436 to 456 (TAPL…SNLL), and 458 to 478 (FFDG…VMAS).

It belongs to the HAK/KUP transporter (TC 2.A.72) family.

The protein localises to the cell inner membrane. The catalysed reaction is K(+)(in) + H(+)(in) = K(+)(out) + H(+)(out). Functionally, transport of potassium into the cell. Likely operates as a K(+):H(+) symporter. In Syntrophobacter fumaroxidans (strain DSM 10017 / MPOB), this protein is Probable potassium transport system protein Kup 1.